The following is a 193-amino-acid chain: Protein PrsJ (193 aa).

A signal peptide spans 1–27 (MVVNKTTAVLYLIALSLSGFIHTFLRA).

The protein resides in the periplasm. In terms of biological role, this protein maintains pilus integrity and thus is an important participant in pilus assembly. It may function as molecular chaperone directly or indirectly in the correct assembly of PapA subunits. The protein is Protein PrsJ (prsJ) of Escherichia coli.